A 68-amino-acid polypeptide reads, in one-letter code: Beta-defensin 1 (68 aa).

Residues 1–21 (MRTSYLLLFTLCLLLSEMASG) form the signal peptide. The propeptide occupies 22–32 (DNFLTGLGHRS). Cystine bridges form between cysteine 37–cysteine 66, cysteine 44–cysteine 59, and cysteine 49–cysteine 67.

This sequence belongs to the beta-defensin family. Monomer. Homodimer.

Its subcellular location is the secreted. It is found in the membrane. Functionally, has bactericidal activity. May act as a ligand for C-C chemokine receptor CCR6. Positively regulates the sperm motility and bactericidal activity in a CCR6-dependent manner. Binds to CCR6 and triggers Ca2+ mobilization in the sperm which is important for its motility. The chain is Beta-defensin 1 (DEFB1) from Cercopithecus erythrogaster (Red-bellied monkey).